The chain runs to 187 residues: Protein GrpE (187 aa).

The interval 1–38 (MSEEKQTVEQNETEEQEIIEEQAAADEQQEETNESELL) is disordered. Positions 11–34 (NETEEQEIIEEQAAADEQQEETNE) are enriched in acidic residues.

It belongs to the GrpE family. Homodimer.

It localises to the cytoplasm. In terms of biological role, participates actively in the response to hyperosmotic and heat shock by preventing the aggregation of stress-denatured proteins, in association with DnaK and GrpE. It is the nucleotide exchange factor for DnaK and may function as a thermosensor. Unfolded proteins bind initially to DnaJ; upon interaction with the DnaJ-bound protein, DnaK hydrolyzes its bound ATP, resulting in the formation of a stable complex. GrpE releases ADP from DnaK; ATP binding to DnaK triggers the release of the substrate protein, thus completing the reaction cycle. Several rounds of ATP-dependent interactions between DnaJ, DnaK and GrpE are required for fully efficient folding. The chain is Protein GrpE from Bacillus subtilis (strain 168).